We begin with the raw amino-acid sequence, 359 residues long: MSPTPRRRATLASLAAELKVSRTTVSNAFNRPDQLSADLRERVLATAKRLGYAGPDPVARSLRTRKAGAVGLVMAEPLTYFFSDPAARDFVAGVAQSCEELGQGLQLVSVGSSRSLADGTAAVLGAGVDGFVVYSVGDDDPYLQVVLQRRLPVVVVDQPKDLSGVSRVGIDDRAAMRELAGYVLGLGHRELGLLTMRLGRDRRQDLVDAERLRSPTFDVQRERIVGVWEAMTAAGVDPDSLTVVESYEHLPTSGGTAAKVALQANPRLTALMCTADILALSAMDYLRAHGIYVPGQMTVTGFDGVPEALSRGLTTVAQPSLHKGHRAGELLLKPPRSGLPVIEVLDTELVRGRTAGPPA.

The HTH lacI-type domain maps to 9 to 64 (ATLASLAAELKVSRTTVSNAFNRPDQLSADLRERVLATAKRLGYAGPDPVARSLRT). The H-T-H motif DNA-binding region spans 11 to 30 (LASLAAELKVSRTTVSNAFN).

Functionally, transcriptional regulator that negatively regulates transcription of the mce4 operon, which is involved in cholesterol transport and utilization. Acts by binding to the promoter region of the mce4 operon. It affects the utilization of host cholesterol as a carbon source, impacting the host's innate immune response. This is HTH-type transcriptional regulator Rv3575c from Mycobacterium tuberculosis (strain ATCC 25618 / H37Rv).